The following is a 196-amino-acid chain: MIEYIKGEIVELTPTRMILECGGIGYELNISLNTYSAFGNKTTGKIYIYEVIREDAHLLFGFAEKIERELFLLLTSVSGVGPNTARMILSSLPPSELVQVIGSKNEAALTAVKGIGLKTAQRILVDLKNKVKPMESMAGNLPEASVSNGAVTEEAVAALVMLGFQKAASQKAVSAILKGSPTLAVEQVIKTALRML.

The domain I stretch occupies residues Met1–Ala63. The interval Glu64 to Pro142 is domain II. The interval Pro142–Val146 is flexible linker. Residues Ser147 to Leu196 are domain III.

This sequence belongs to the RuvA family. Homotetramer. Forms an RuvA(8)-RuvB(12)-Holliday junction (HJ) complex. HJ DNA is sandwiched between 2 RuvA tetramers; dsDNA enters through RuvA and exits via RuvB. An RuvB hexamer assembles on each DNA strand where it exits the tetramer. Each RuvB hexamer is contacted by two RuvA subunits (via domain III) on 2 adjacent RuvB subunits; this complex drives branch migration. In the full resolvosome a probable DNA-RuvA(4)-RuvB(12)-RuvC(2) complex forms which resolves the HJ.

It is found in the cytoplasm. The RuvA-RuvB-RuvC complex processes Holliday junction (HJ) DNA during genetic recombination and DNA repair, while the RuvA-RuvB complex plays an important role in the rescue of blocked DNA replication forks via replication fork reversal (RFR). RuvA specifically binds to HJ cruciform DNA, conferring on it an open structure. The RuvB hexamer acts as an ATP-dependent pump, pulling dsDNA into and through the RuvAB complex. HJ branch migration allows RuvC to scan DNA until it finds its consensus sequence, where it cleaves and resolves the cruciform DNA. The chain is Holliday junction branch migration complex subunit RuvA from Parabacteroides distasonis (strain ATCC 8503 / DSM 20701 / CIP 104284 / JCM 5825 / NCTC 11152).